We begin with the raw amino-acid sequence, 289 residues long: Proteasome assembly chaperone 1 (289 aa).

Positions 1–38 (MAATFFGEVVKAPCRAGTEEEEEEEEQSRRDTPEDREV) are disordered. Ala2 bears the N-acetylalanine mark. Residue Thr18 is modified to Phosphothreonine. A compositionally biased stretch (basic and acidic residues) spans 27–38 (QSRRDTPEDREV). Position 55 is a phosphothreonine (Thr55). A Phosphoserine modification is found at Ser181. An N6-acetyllysine modification is found at Lys265.

This sequence belongs to the PSMG1 family. Forms a heterodimer with PSMG2. The PSMG1-PSMG2 heterodimer interacts directly with the PSMA5 and PSMA7 proteasome alpha subunits. In terms of processing, degraded by the proteasome upon completion of 20S proteasome maturation. In terms of tissue distribution, highly expressed in testis with moderate expression in brain, liver and kidney and low levels in heart, skeletal muscle and pancreas.

It is found in the cytoplasm. It localises to the endoplasmic reticulum. Functionally, chaperone protein which promotes assembly of the 20S proteasome as part of a heterodimer with PSMG2. The PSMG1-PSMG2 heterodimer binds to the PSMA5 and PSMA7 proteasome subunits, promotes assembly of the proteasome alpha subunits into the heteroheptameric alpha ring and prevents alpha ring dimerization. The chain is Proteasome assembly chaperone 1 from Mus musculus (Mouse).